A 59-amino-acid chain; its full sequence is Aedesin (59 aa).

Positions Met1 to Ala23 are cleaved as a signal peptide.

The protein belongs to the cecropin family. In terms of tissue distribution, salivary gland (at protein level).

The protein localises to the secreted. Functionally, antimicrobial peptide. Exhibits antibacterial activity against Gram-negative bacteria, such as Escherichia coli, Pseudomonas aeruginosa, Acinetobacter baumannii and Klebsiella pneumoniae. Shows no antibacterial effects against Gram-positive bacteria, such as Staphylococcus aureus, Enterococcus faecalis and Enterococcus faecium. Exhibits antiviral activity against all four dengue virus serotypes and chikungunya virus. Exhibits leishmanicidal activity. Partially neutralizes lipopolysaccharides (LPS). Exhibits anti-inflammatory properties: inhibits LPS-induced iNOS/NOS2 transcription, nitric oxide (NO) and pro-inflammatory cytokine production in mouse macrophages and human peripheral blood mononuclear cells (PBMCs); inhibits LPS-induced activation of MAPK and NF-kappa-B signaling pathways in mouse macrophages. The protein is Aedesin of Aedes aegypti (Yellowfever mosquito).